The following is a 292-amino-acid chain: Shikimate dehydrogenase (NADP(+)) (292 aa).

Shikimate is bound by residues 22-24 (SLS) and serine 69. Residue lysine 73 is the Proton acceptor of the active site. Positions 94 and 111 each coordinate shikimate. NADP(+) contacts are provided by residues 135-139 (GVGGA) and isoleucine 236. Residue tyrosine 238 participates in shikimate binding. NADP(+) is bound at residue glycine 260.

Belongs to the shikimate dehydrogenase family. As to quaternary structure, homodimer.

It carries out the reaction shikimate + NADP(+) = 3-dehydroshikimate + NADPH + H(+). Its pathway is metabolic intermediate biosynthesis; chorismate biosynthesis; chorismate from D-erythrose 4-phosphate and phosphoenolpyruvate: step 4/7. Functionally, involved in the biosynthesis of the chorismate, which leads to the biosynthesis of aromatic amino acids. Catalyzes the reversible NADPH linked reduction of 3-dehydroshikimate (DHSA) to yield shikimate (SA). The protein is Shikimate dehydrogenase (NADP(+)) of Streptococcus pyogenes serotype M28 (strain MGAS6180).